The chain runs to 235 residues: Transmembrane protein 215 (235 aa).

The next 2 membrane-spanning stretches (helical) occupy residues 12–32 and 40–60; these read LVVA…VSGM and IPLL…IALA. The disordered stretch occupies residues 99-146; it reads SDLESGKGSSDELAKKAGLRGKQLPQGPGEVPMASSVTTPTPTEEGEC.

Its subcellular location is the membrane. This chain is Transmembrane protein 215 (Tmem215), found in Mus musculus (Mouse).